A 45-amino-acid chain; its full sequence is Large ribosomal subunit protein bL34 (45 aa).

Belongs to the bacterial ribosomal protein bL34 family.

This chain is Large ribosomal subunit protein bL34, found in Acidothermus cellulolyticus (strain ATCC 43068 / DSM 8971 / 11B).